The following is a 569-amino-acid chain: Cryptochrome DASH, chloroplastic/mitochondrial (569 aa).

A Photolyase/cryptochrome alpha/beta domain is found at 84–221; the sequence is GVTILWFRND…KLELIWGSTM (138 aa). Residues Tyr-316 and 329 to 333 contribute to the FAD site; that span reads STKFS. Position 436 (Arg-436) interacts with ATP. Residues Asp-466 and Asp-468 each coordinate FAD. Asp-485 is an ATP binding site. Positions 541–569 are disordered; the sequence is GNGPMAGGSKSGGGFRGSHSGRRSRHNGP. Residues 544–556 show a composition bias toward gly residues; it reads PMAGGSKSGGGFR. Positions 559-569 are enriched in basic residues; sequence HSGRRSRHNGP.

The protein belongs to the DNA photolyase class-1 family. In terms of assembly, homodimer. Requires FAD as cofactor. (6R)-5,10-methylene-5,6,7,8-tetrahydrofolate is required as a cofactor.

It localises to the plastid. Its subcellular location is the chloroplast. The protein resides in the mitochondrion. In terms of biological role, may have a photoreceptor function. Binds ss- and ds-DNA in a sequence non-specific manner. Has a photolyase activity specific for cyclobutane pyrimidine dimers in ssDNA. The sequence is that of Cryptochrome DASH, chloroplastic/mitochondrial (CRYD) from Arabidopsis thaliana (Mouse-ear cress).